Consider the following 258-residue polypeptide: MLVLVSPAKTLDFENPPLTTEHTRPTLLDQSQALIKECQKLTPVQIASLMKVSDKIAGLNAARFAQWQPNFTLGEAKQAIFAFRGDVYTGFDADSLSAAQLQSAQNHLRILSGLYGLLKPLDLILPYRLEMGTRLENAKGSNLYAFWGEIITDEVNRALIEQGDDIIVNLASNEYFKAVKEKSLKGRLVTPVFKDCKNGQYKVISFYAKKARGLMARFIIEQQPKDLTALISFDLDGYYYSEAQSTPSSPVFLRDEQV.

It belongs to the UPF0246 family.

The protein is UPF0246 protein Sden_2729 of Shewanella denitrificans (strain OS217 / ATCC BAA-1090 / DSM 15013).